The following is an 856-amino-acid chain: Glucose transport transcription regulator RGT1 (856 aa).

Low complexity predominate over residues 1-13; it reads MNGATATATAAVG. The segment at 1-42 is disordered; sequence MNGATATATAAVGAEEEGGAREGSRRRDSVESAGDGRRRTKV. The segment covering 18-37 has biased composition (basic and acidic residues); that stretch reads GGAREGSRRRDSVESAGDGR. The zn(2)-C6 fungal-type DNA-binding region spans 46-75; the sequence is CDQCRRKKIKCEYQEDAQSCSGCRKNSERC. 3 disordered regions span residues 83–121, 168–244, and 261–330; these read KRGP…KAAP, QRRS…QQLP, and TSAS…PADP. Basic and acidic residues predominate over residues 99-117; sequence GARETEGARGELDTSRADG. The segment covering 168–183 has biased composition (polar residues); it reads QRRSSLESVNSDASGP. 3 stretches are compositionally biased toward low complexity: residues 184–207, 261–270, and 277–294; these read QSQQ…SRSY, TSASSQSVQL, and STSL…AYSP. Residues 303-312 show a composition bias toward polar residues; that stretch reads ESLTTPTAGS.

Belongs to the EDS1/RGT1 family.

It is found in the nucleus. The protein localises to the cytoplasm. Its function is as follows. Glucose-responsive transcription factor that regulates expression of several glucose transporter (HXT) genes in response to glucose. In the absence of glucose, it functions as a transcriptional repressor, whereas high concentrations of glucose cause it to function as a transcriptional activator. In cells growing on low levels of glucose, has a neutral role, neither repressing nor activating transcription. This is Glucose transport transcription regulator RGT1 (RGT1) from Eremothecium gossypii (strain ATCC 10895 / CBS 109.51 / FGSC 9923 / NRRL Y-1056) (Yeast).